A 129-amino-acid chain; its full sequence is Probable cytochrome b5 2 (129 aa).

Residues glutamate 3–leucine 79 enclose the Cytochrome b5 heme-binding domain. 2 residues coordinate heme: histidine 38 and histidine 62. The chain crosses the membrane as a helical span at residues valine 105 to lysine 125.

Belongs to the cytochrome b5 family.

It localises to the endoplasmic reticulum membrane. Its subcellular location is the microsome membrane. The protein resides in the mitochondrion. Its function is as follows. Membrane bound hemoprotein which function as an electron carrier for several membrane bound oxygenases. The polypeptide is Probable cytochrome b5 2 (oca8) (Schizosaccharomyces pombe (strain 972 / ATCC 24843) (Fission yeast)).